Here is a 463-residue protein sequence, read N- to C-terminus: Glutamate--tRNA ligase 1 (463 aa).

The 'HIGH' region signature appears at 10–20 (PSPTGYLHIGG). Positions 238-242 (KLSKR) match the 'KMSKS' region motif. Lys241 provides a ligand contact to ATP.

Belongs to the class-I aminoacyl-tRNA synthetase family. Glutamate--tRNA ligase type 1 subfamily. In terms of assembly, monomer.

It localises to the cytoplasm. The catalysed reaction is tRNA(Glu) + L-glutamate + ATP = L-glutamyl-tRNA(Glu) + AMP + diphosphate. In terms of biological role, catalyzes the attachment of glutamate to tRNA(Glu) in a two-step reaction: glutamate is first activated by ATP to form Glu-AMP and then transferred to the acceptor end of tRNA(Glu). This chain is Glutamate--tRNA ligase 1, found in Helicobacter pylori (strain ATCC 700392 / 26695) (Campylobacter pylori).